The primary structure comprises 317 residues: Protein IRX15-LIKE (317 aa).

The helical transmembrane segment at Leu-27–Thr-47 threads the bilayer.

Expressed in roots, rosette leaves, stems and siliques. Expressed in the xylem.

Its subcellular location is the golgi apparatus membrane. Required for xylan biosynthesis, but not directly involved in catalyzing the addition of sugars to the growing polymer. In Arabidopsis thaliana (Mouse-ear cress), this protein is Protein IRX15-LIKE (IRX15-L).